Reading from the N-terminus, the 202-residue chain is Small ribosomal subunit protein uS2 (202 aa).

It belongs to the universal ribosomal protein uS2 family.

The chain is Small ribosomal subunit protein uS2 (rps2) from Pyrococcus abyssi (strain GE5 / Orsay).